We begin with the raw amino-acid sequence, 1371 residues long: DNA-directed RNA polymerase subunit beta' (1371 aa).

Cysteine 71, cysteine 73, cysteine 86, and cysteine 89 together coordinate Zn(2+). 3 residues coordinate Mg(2+): aspartate 461, aspartate 463, and aspartate 465. 4 residues coordinate Zn(2+): cysteine 803, cysteine 877, cysteine 884, and cysteine 887.

It belongs to the RNA polymerase beta' chain family. The RNAP catalytic core consists of 2 alpha, 1 beta, 1 beta' and 1 omega subunit. When a sigma factor is associated with the core the holoenzyme is formed, which can initiate transcription. Mg(2+) serves as cofactor. Zn(2+) is required as a cofactor.

The catalysed reaction is RNA(n) + a ribonucleoside 5'-triphosphate = RNA(n+1) + diphosphate. In terms of biological role, DNA-dependent RNA polymerase catalyzes the transcription of DNA into RNA using the four ribonucleoside triphosphates as substrates. This chain is DNA-directed RNA polymerase subunit beta', found in Thermodesulfovibrio yellowstonii (strain ATCC 51303 / DSM 11347 / YP87).